We begin with the raw amino-acid sequence, 450 residues long: tRNA-2-methylthio-N(6)-dimethylallyladenosine synthase (450 aa).

An MTTase N-terminal domain is found at 8–128 (KRLYIKTYGC…LPELIARAHR (121 aa)). Residues C17, C53, C91, C166, C170, and C173 each coordinate [4Fe-4S] cluster. Residues 152-382 (RPTGVTAFLT…QALLEQQQLA (231 aa)) form the Radical SAM core domain. The TRAM domain maps to 385–447 (AAQAGRVLPV…RNSLAGVLEL (63 aa)).

The protein belongs to the methylthiotransferase family. MiaB subfamily. Monomer. [4Fe-4S] cluster is required as a cofactor.

The protein resides in the cytoplasm. It catalyses the reaction N(6)-dimethylallyladenosine(37) in tRNA + (sulfur carrier)-SH + AH2 + 2 S-adenosyl-L-methionine = 2-methylsulfanyl-N(6)-dimethylallyladenosine(37) in tRNA + (sulfur carrier)-H + 5'-deoxyadenosine + L-methionine + A + S-adenosyl-L-homocysteine + 2 H(+). In terms of biological role, catalyzes the methylthiolation of N6-(dimethylallyl)adenosine (i(6)A), leading to the formation of 2-methylthio-N6-(dimethylallyl)adenosine (ms(2)i(6)A) at position 37 in tRNAs that read codons beginning with uridine. The polypeptide is tRNA-2-methylthio-N(6)-dimethylallyladenosine synthase (Phenylobacterium zucineum (strain HLK1)).